The sequence spans 424 residues: Zygote arrest protein 1 (424 aa).

Disordered stretches follow at residues Arg-125–Phe-175 and Gly-196–Leu-313. Gly residues predominate over residues Gly-141–Ser-150. Residues Arg-289–Glu-298 show a composition bias toward basic and acidic residues. Residues Lys-326–Gly-409 form a 3CxxC-type zinc finger.

This sequence belongs to the ZAR1 family. Interacts with YBX2. Post-translationally, ubiquitinated and degradaded by the proteasome during oocyte meiotic maturation, leading to MARDO (mitochondria-associated ribonucleoprotein domain) membraneless compartment dissolution. In terms of tissue distribution, ovary and testis.

It localises to the cytoplasm. Its subcellular location is the cytoplasmic ribonucleoprotein granule. In terms of biological role, mRNA-binding protein that mediates formation of MARDO (mitochondria-associated ribonucleoprotein domain), a membraneless compartment that stores maternal mRNAs in oocytes. MARDO assembly around mitochondria is directed by an increase in mitochondrial membrane potential during oocyte growth. Promotes formation of MARDO phase-separated membraneless compartment by undergoing liquid-liquid phase separation upon binding to maternal mRNAs. Binds to the 3'-UTR of maternal mRNAs. Maternal mRNAs stored in the MARDO are translationally repressed. Essential for female fertility and oocyte-to-embryo transition by coordinating maternal mRNA storage, translation and degradation. This Homo sapiens (Human) protein is Zygote arrest protein 1.